An 84-amino-acid chain; its full sequence is Cell division topological specificity factor (84 aa).

The protein belongs to the MinE family.

In terms of biological role, prevents the cell division inhibition by proteins MinC and MinD at internal division sites while permitting inhibition at polar sites. This ensures cell division at the proper site by restricting the formation of a division septum at the midpoint of the long axis of the cell. This is Cell division topological specificity factor from Pseudomonas fluorescens (strain ATCC BAA-477 / NRRL B-23932 / Pf-5).